The chain runs to 374 residues: UPF0674 endoplasmic reticulum membrane protein C2G5.01 (374 aa).

A helical membrane pass occupies residues 49 to 68 (FRLEFVILACFFLYVFSFIT). Asn287 carries an N-linked (GlcNAc...) asparagine glycan. The interval 335–374 (KAAKKKVKSSGDISKLSESDQKKRMERERQRKMRRRAKKM) is disordered. Basic and acidic residues predominate over residues 349–363 (KLSESDQKKRMERER). The span at 364–374 (QRKMRRRAKKM) shows a compositional bias: basic residues.

It belongs to the UPF0674 family.

Its subcellular location is the endoplasmic reticulum membrane. This is UPF0674 endoplasmic reticulum membrane protein C2G5.01 from Schizosaccharomyces pombe (strain 972 / ATCC 24843) (Fission yeast).